A 321-amino-acid chain; its full sequence is MRSANEPDATHVAVLLAETIVALRPALHTGAAVRCVDATGGRGGHSAALLAELGAADTLLILDRDPSAIAALRARFAQDSRVYIRQARFSQLAEVLAALEWERVDAILADLGVSSPQLDEAARGFSFLRDGPLDMRMDPGADRSAAEWLATATEADMTRVLREYGEERFARPIARAILRAREQAPITRTLQLAELIAQVLPRHETGQHPATRSFQGIRIFINRELEELEAFLPQAMNALRAGGRLAVISFHSLEDRLVKRFFRADDYRISADVPLRASELPPLPWHPAGKALRAGPRETRDNPRSRSAVLRVAERSERHAA.

S-adenosyl-L-methionine-binding positions include 43–45, Asp63, Phe89, Asp110, and Gln117; that span reads GGH. The tract at residues 286-321 is disordered; that stretch reads HPAGKALRAGPRETRDNPRSRSAVLRVAERSERHAA. Composition is skewed to basic and acidic residues over residues 295–304 and 312–321; these read GPRETRDNPR and VAERSERHAA.

This sequence belongs to the methyltransferase superfamily. RsmH family.

The protein resides in the cytoplasm. The catalysed reaction is cytidine(1402) in 16S rRNA + S-adenosyl-L-methionine = N(4)-methylcytidine(1402) in 16S rRNA + S-adenosyl-L-homocysteine + H(+). In terms of biological role, specifically methylates the N4 position of cytidine in position 1402 (C1402) of 16S rRNA. This chain is Ribosomal RNA small subunit methyltransferase H, found in Acidithiobacillus ferrooxidans (strain ATCC 23270 / DSM 14882 / CIP 104768 / NCIMB 8455) (Ferrobacillus ferrooxidans (strain ATCC 23270)).